Reading from the N-terminus, the 1394-residue chain is DNA-directed RNA polymerase subunit beta' (1394 aa).

4 residues coordinate Zn(2+): cysteine 70, cysteine 72, cysteine 85, and cysteine 88. Positions 470, 472, and 474 each coordinate Mg(2+). Residues cysteine 815, cysteine 889, cysteine 896, and cysteine 899 each coordinate Zn(2+).

The protein belongs to the RNA polymerase beta' chain family. As to quaternary structure, the RNAP catalytic core consists of 2 alpha, 1 beta, 1 beta' and 1 omega subunit. When a sigma factor is associated with the core the holoenzyme is formed, which can initiate transcription. Requires Mg(2+) as cofactor. Zn(2+) serves as cofactor.

It catalyses the reaction RNA(n) + a ribonucleoside 5'-triphosphate = RNA(n+1) + diphosphate. Its function is as follows. DNA-dependent RNA polymerase catalyzes the transcription of DNA into RNA using the four ribonucleoside triphosphates as substrates. This chain is DNA-directed RNA polymerase subunit beta', found in Anaeromyxobacter dehalogenans (strain 2CP-C).